Reading from the N-terminus, the 51-residue chain is Large ribosomal subunit protein eL39 (51 aa).

It belongs to the eukaryotic ribosomal protein eL39 family.

The chain is Large ribosomal subunit protein eL39 from Methanosarcina acetivorans (strain ATCC 35395 / DSM 2834 / JCM 12185 / C2A).